Reading from the N-terminus, the 178-residue chain is Large ribosomal subunit protein uL6 (178 aa).

The segment at 159 to 178 (GKGIRYEGEHVRRKEGKTGK) is disordered.

Belongs to the universal ribosomal protein uL6 family. As to quaternary structure, part of the 50S ribosomal subunit.

Its function is as follows. This protein binds to the 23S rRNA, and is important in its secondary structure. It is located near the subunit interface in the base of the L7/L12 stalk, and near the tRNA binding site of the peptidyltransferase center. This is Large ribosomal subunit protein uL6 from Listeria monocytogenes serotype 4b (strain CLIP80459).